The sequence spans 297 residues: tRNA dimethylallyltransferase (297 aa).

10–17 contributes to the ATP binding site; sequence GITASGKS. 12 to 17 contributes to the substrate binding site; sequence TASGKS. The tract at residues 36-39 is interaction with substrate tRNA; it reads DSKQ.

It belongs to the IPP transferase family. Monomer. It depends on Mg(2+) as a cofactor.

The enzyme catalyses adenosine(37) in tRNA + dimethylallyl diphosphate = N(6)-dimethylallyladenosine(37) in tRNA + diphosphate. Its function is as follows. Catalyzes the transfer of a dimethylallyl group onto the adenine at position 37 in tRNAs that read codons beginning with uridine, leading to the formation of N6-(dimethylallyl)adenosine (i(6)A). This chain is tRNA dimethylallyltransferase, found in Wolbachia pipientis subsp. Culex pipiens (strain wPip).